The following is a 384-amino-acid chain: Ceramide very long chain fatty acid hydroxylase SCS7 (384 aa).

Residues 1–197 (MSTNTSKTLE…NFLEPLTKTA (197 aa)) are Cytoplasmic-facing. The Cytochrome b5 heme-binding domain occupies 9-90 (LELFSKKTVQ…EDEYLIGYLA (82 aa)). Heme contacts are provided by His-45 and His-72. A helical transmembrane segment spans residues 198–216 (WWVVPVAWLPVVVYHMGVA). At 217 to 221 (LKNMN) the chain is on the lumenal side. A helical membrane pass occupies residues 222 to 246 (QLFACFLFCVGVFVWTLIEYGLHRF). Residues His-244, His-249, His-268, His-271, and His-272 each coordinate Zn(2+). Residues 247–284 (LFHFDDWLPESNIAFATHFLLHGCHHYLPMDKYRLVMP) lie on the Cytoplasmic side of the membrane. A helical membrane pass occupies residues 285-302 (PTLFVILCAPFYKLVFAL). The Lumenal portion of the chain corresponds to 303–304 (LP). Residues 305–328 (LYWAYAGFAGGLFGYVCYDECHFF) form a helical membrane-spanning segment. Positions 326, 330, 345, 348, and 349 each coordinate Zn(2+). At 329–384 (LHHSKLPPFMRKLKKYHLEHHYKNYQLGFGVTSWFWDEVFGTYLGPDAPLSKMKYE) the chain is on the cytoplasmic side.

Belongs to the sterol desaturase family. SCS7 subfamily. Zn(2+) serves as cofactor.

It is found in the endoplasmic reticulum membrane. The catalysed reaction is an N-(1,2 saturated acyl)-(4R)-hydroxysphinganine + 2 Fe(II)-[cytochrome b5] + O2 + 2 H(+) = an N-(2R-hydroxyacyl)-4R-hydroxysphinganine + 2 Fe(III)-[cytochrome b5] + H2O. It catalyses the reaction an N-(1,2-saturated acyl)sphinganine + 2 Fe(II)-[cytochrome b5] + O2 + 2 H(+) = an N-[(2'R)-hydroxyacyl]sphinganine + 2 Fe(III)-[cytochrome b5] + H2O. It carries out the reaction N-hexacosanoyl-(4R)-hydroxysphinganine + 2 Fe(II)-[cytochrome b5] + O2 + 2 H(+) = N-(2-hydroxyhexacosanyl)-(4R)-hydroxysphinganine + 2 Fe(III)-[cytochrome b5] + H2O. Its pathway is sphingolipid metabolism. Ceramide hydroxylase involved in the hydroxylation of sphingolipid-associated very long chain fatty acids. Postulated to hydroxylate the very long chain fatty acid of dihydroceramides and phytoceramides at C-2. This Saccharomyces cerevisiae (strain ATCC 204508 / S288c) (Baker's yeast) protein is Ceramide very long chain fatty acid hydroxylase SCS7.